Consider the following 85-residue polypeptide: UPF0213 protein NP_0776A (85 aa).

The GIY-YIG domain occupies 3–78 (ADHYVYVLSC…KSLSRAKKER (76 aa)). The span at 58–70 (KSAAMQREHEIKS) shows a compositional bias: basic and acidic residues. A disordered region spans residues 58–85 (KSAAMQREHEIKSLSRAKKERLVADETG).

Belongs to the UPF0213 family.

The protein is UPF0213 protein NP_0776A of Natronomonas pharaonis (strain ATCC 35678 / DSM 2160 / CIP 103997 / JCM 8858 / NBRC 14720 / NCIMB 2260 / Gabara) (Halobacterium pharaonis).